The chain runs to 44 residues: Protein PsbN (44 aa).

Residues 7–29 (VATVFVSCLVLSITGYSLYIGFG) form a helical membrane-spanning segment.

This sequence belongs to the PsbN family.

Its subcellular location is the plastid. The protein resides in the chloroplast thylakoid membrane. Functionally, may play a role in photosystem I and II biogenesis. The chain is Protein PsbN from Nephroselmis olivacea (Green alga).